We begin with the raw amino-acid sequence, 360 residues long: UDP-N-acetylglucosamine--N-acetylmuramyl-(pentapeptide) pyrophosphoryl-undecaprenol N-acetylglucosamine transferase (360 aa).

UDP-N-acetyl-alpha-D-glucosamine is bound by residues 15–17 (TGG), Asn124, Arg165, Ser191, and Gln285.

Belongs to the glycosyltransferase 28 family. MurG subfamily.

It localises to the cell inner membrane. The enzyme catalyses di-trans,octa-cis-undecaprenyl diphospho-N-acetyl-alpha-D-muramoyl-L-alanyl-D-glutamyl-meso-2,6-diaminopimeloyl-D-alanyl-D-alanine + UDP-N-acetyl-alpha-D-glucosamine = di-trans,octa-cis-undecaprenyl diphospho-[N-acetyl-alpha-D-glucosaminyl-(1-&gt;4)]-N-acetyl-alpha-D-muramoyl-L-alanyl-D-glutamyl-meso-2,6-diaminopimeloyl-D-alanyl-D-alanine + UDP + H(+). It participates in cell wall biogenesis; peptidoglycan biosynthesis. Functionally, cell wall formation. Catalyzes the transfer of a GlcNAc subunit on undecaprenyl-pyrophosphoryl-MurNAc-pentapeptide (lipid intermediate I) to form undecaprenyl-pyrophosphoryl-MurNAc-(pentapeptide)GlcNAc (lipid intermediate II). In Gloeothece citriformis (strain PCC 7424) (Cyanothece sp. (strain PCC 7424)), this protein is UDP-N-acetylglucosamine--N-acetylmuramyl-(pentapeptide) pyrophosphoryl-undecaprenol N-acetylglucosamine transferase.